A 1168-amino-acid polypeptide reads, in one-letter code: Transcription-repair-coupling factor (1168 aa).

The Helicase ATP-binding domain occupies 633–794 (DMQKSRPMDR…MLGVRDLSVI (162 aa)). 646 to 653 (GDVGYGKT) is an ATP binding site. The DEEQ box motif lies at 747 to 750 (DEEQ). Positions 808-969 (VLEQNMSFIK…GFKIAMRDLN (162 aa)) constitute a Helicase C-terminal domain.

It in the N-terminal section; belongs to the UvrB family. This sequence in the C-terminal section; belongs to the helicase family. RecG subfamily.

Its subcellular location is the cytoplasm. Its function is as follows. Couples transcription and DNA repair by recognizing RNA polymerase (RNAP) stalled at DNA lesions. Mediates ATP-dependent release of RNAP and its truncated transcript from the DNA, and recruitment of nucleotide excision repair machinery to the damaged site. The sequence is that of Transcription-repair-coupling factor from Staphylococcus aureus (strain Mu50 / ATCC 700699).